Reading from the N-terminus, the 414-residue chain is Ceramide synthase 5 (414 aa).

Residues 1 to 43 are Lumenal-facing; it reads MATAAAETLGLLWGWLWSESFWLPQNVSWADLEGPGDGYGYPR. The N-linked (GlcNAc...) asparagine glycan is linked to asparagine 26. Residues 44 to 64 form a helical membrane-spanning segment; that stretch reads AQHVLSVFPLAVCIFSVRMLF. Residues 75–136 form a homeobox-like region; sequence RVGIKDSPVN…RHRRNQDKPP (62 aa). A TLC domain is found at 139–340; sequence TKFCESMWRF…IVQTASKALS (202 aa). Transmembrane regions (helical) follow at residues 148 to 168, 187 to 207, 214 to 234, and 272 to 292; these read FTYY…MPWF, LYYY…SQFI, FLMM…SYVN, and LFVI…PLWI. Positions 299–309 match the Last loop motif motif; sequence ESWEIIGPYPS. Residues 312-332 traverse the membrane as a helical segment; it reads LFNALLLILQVLHAIWSYLIV. At 333-414 the chain is on the cytoplasmic side; that stretch reads QTASKALSRG…RASPHLHSCD (82 aa). Residues 347–373 form a disordered region; that stretch reads DDRSDVESSSEEEDETTHKNNLSGSSS.

In terms of assembly, interacts with PAQR4; the interaction regulates the stability and activity of CERS5 and is inhibited in presence of ceramides. Post-translationally, phosphorylated at the C-terminus by CK2. Ubiquitously expressed, with highest levels in testis and kidney. Expressed in pulmonary epithelia.

It localises to the endoplasmic reticulum membrane. The catalysed reaction is a sphingoid base + hexadecanoyl-CoA = an N-hexadecanoyl-sphingoid base + CoA + H(+). It catalyses the reaction sphinganine + hexadecanoyl-CoA = N-hexadecanoylsphinganine + CoA + H(+). It carries out the reaction hexadecasphinganine + hexadecanoyl-CoA = N-hexadecanoylhexadecasphinganine + CoA + H(+). The enzyme catalyses sphing-4-enine + hexadecanoyl-CoA = N-hexadecanoylsphing-4-enine + CoA + H(+). The catalysed reaction is 2-hydroxyhexadecanoyl-CoA + sphinganine = N-(2-hydroxyhexadecanoyl)-sphinganine + CoA + H(+). It catalyses the reaction sphinganine + tetradecanoyl-CoA = N-(tetradecanoyl)-sphinganine + CoA + H(+). It carries out the reaction sphinganine + octadecanoyl-CoA = N-(octadecanoyl)-sphinganine + CoA + H(+). The enzyme catalyses sphinganine + (9Z)-octadecenoyl-CoA = N-(9Z-octadecenoyl)-sphinganine + CoA + H(+). The catalysed reaction is a fatty acyl-CoA + sphing-4-enine = an N-acylsphing-4-enine + CoA + H(+). It catalyses the reaction tetracosenoyl-CoA + sphing-4-enine = N-(tetracosenoyl)-sphing-4-enine + CoA + H(+). Its pathway is lipid metabolism; sphingolipid metabolism. Inhibited by fumonisin B1. Its function is as follows. Ceramide synthase that catalyzes the transfer of the acyl chain from acyl-CoA to a sphingoid base, with high selectivity toward palmitoyl-CoA (hexadecanoyl-CoA; C16:0-CoA). Can use other acyl donors, but with less efficiency. N-acylates sphinganine and sphingosine bases to form dihydroceramides and ceramides in de novo synthesis and salvage pathways, respectively. Plays a role in de novo ceramide synthesis and surfactant homeostasis in pulmonary epithelia. The sequence is that of Ceramide synthase 5 from Mus musculus (Mouse).